Reading from the N-terminus, the 250-residue chain is Triosephosphate isomerase (250 aa).

Position 9 to 11 (9 to 11 (NWK)) interacts with substrate. Histidine 96 serves as the catalytic Electrophile. Catalysis depends on glutamate 168, which acts as the Proton acceptor. Substrate-binding positions include glycine 174, serine 216, and 237-238 (GG).

Belongs to the triosephosphate isomerase family. In terms of assembly, homodimer.

The protein localises to the cytoplasm. The enzyme catalyses D-glyceraldehyde 3-phosphate = dihydroxyacetone phosphate. It functions in the pathway carbohydrate biosynthesis; gluconeogenesis. The protein operates within carbohydrate degradation; glycolysis; D-glyceraldehyde 3-phosphate from glycerone phosphate: step 1/1. Involved in the gluconeogenesis. Catalyzes stereospecifically the conversion of dihydroxyacetone phosphate (DHAP) to D-glyceraldehyde-3-phosphate (G3P). In Leptospira borgpetersenii serovar Hardjo-bovis (strain JB197), this protein is Triosephosphate isomerase.